The chain runs to 71 residues: Small ribosomal subunit protein bS18c (71 aa).

The protein belongs to the bacterial ribosomal protein bS18 family. Part of the 30S ribosomal subunit.

Its subcellular location is the plastid. The protein resides in the chloroplast. This Mesostigma viride (Green alga) protein is Small ribosomal subunit protein bS18c (rps18).